A 369-amino-acid chain; its full sequence is Endophilin-A (369 aa).

The region spanning 18 to 248 (TEKMGGAEGT…LQEKRSEAES (231 aa)) is the BAR domain. Residues 227-247 (QCADVLRGLQETLQEKRSEAE) adopt a coiled-coil conformation. A disordered region spans residues 266 to 295 (GGGGGLNEDGTPSHISSSASPLPSPMRSPA). Positions 277–294 (PSHISSSASPLPSPMRSP) are enriched in low complexity. The SH3 domain maps to 305 to 364 (QQQPCCQALYDFEPENPGELAFKENDIITLLNRVDDNWFEGAVNGRTGYFPQSYVQVQVP).

The protein belongs to the endophilin family.

Its subcellular location is the cytoplasm. It is found in the membrane. Required presynaptically at the neuromuscular junction. Implicated in synaptic vesicle endocytosis. The protein is Endophilin-A of Drosophila erecta (Fruit fly).